A 165-amino-acid polypeptide reads, in one-letter code: Large ribosomal subunit protein uL10 (165 aa).

Belongs to the universal ribosomal protein uL10 family. In terms of assembly, part of the ribosomal stalk of the 50S ribosomal subunit. The N-terminus interacts with L11 and the large rRNA to form the base of the stalk. The C-terminus forms an elongated spine to which L12 dimers bind in a sequential fashion forming a multimeric L10(L12)X complex.

Its function is as follows. Forms part of the ribosomal stalk, playing a central role in the interaction of the ribosome with GTP-bound translation factors. This is Large ribosomal subunit protein uL10 from Burkholderia thailandensis (strain ATCC 700388 / DSM 13276 / CCUG 48851 / CIP 106301 / E264).